We begin with the raw amino-acid sequence, 444 residues long: Trigger factor (444 aa).

A PPIase FKBP-type domain is found at 163–248 (GDFLTVDFVG…AKALKKAVAP (86 aa)).

It belongs to the FKBP-type PPIase family. Tig subfamily.

It localises to the cytoplasm. It carries out the reaction [protein]-peptidylproline (omega=180) = [protein]-peptidylproline (omega=0). Involved in protein export. Acts as a chaperone by maintaining the newly synthesized protein in an open conformation. Functions as a peptidyl-prolyl cis-trans isomerase. This is Trigger factor from Granulibacter bethesdensis (strain ATCC BAA-1260 / CGDNIH1).